We begin with the raw amino-acid sequence, 548 residues long: 4-coumarate--CoA ligase CCL1 (548 aa).

Residues 195-203 (SSGTTGLPK), 337-342 (QGYGMT), Asp-426, 438-441 (IVDR), and Lys-532 contribute to the ATP site. The segment at 268–337 (EISKLLELIE…EKLPHAKLGQ (70 aa)) is SBD1. Residues 338 to 405 (GYGMTEAGPV…IRGKQIMKGY (68 aa)) are SBD2.

The protein belongs to the ATP-dependent AMP-binding enzyme family. Mostly expressed in glandular trichomes (lupulin glands) after flowering, and, to a lower extent, in stems, leaves, cones and flowers.

The protein localises to the cytoplasm. The catalysed reaction is (E)-4-coumarate + ATP + CoA = (E)-4-coumaroyl-CoA + AMP + diphosphate. It participates in secondary metabolite biosynthesis. Functionally, involved in the biosynthesis of prenylated phenolics natural products which contribute to the bitter taste of beer and display broad biological activities. Catalyzes the ligation of CoA on (E)-4-coumarate to produce (E)-4-coumaroyl-CoA. The chain is 4-coumarate--CoA ligase CCL1 from Humulus lupulus (European hop).